The following is a 469-amino-acid chain: MDSPPGPTAPPGLTQGPSFMASTTLHSHWNSTQKVSTRAQLLAVSPTASGPEAAAWVPFPTVDVPDHAHYILGTVILLVGLTGMLGNLTVIYTFCRSRSLRTPANMLIINLAVSDFLMSFTQAPVFFASSLYKKWLFGETGCEFYAFCGAVLGITSMITLTAIALDRYLVITRPLATIGMGSKRRTALVLLGIWLYALAWSLPPFFGWSAYVPEGLLTSCSWDYVTFTPQVRAYTMLLFCFVFFLPLLVIIFCYISIFRAIRETGRACEGWSESPQRRRQWHRLQSEWKMAKVALIVILLFVLSWAPYSTVALVAFAGYSHILTPYMSSVPAVIAKASAIHNPIVYAITHPKYRAAIAQHLPCLGVLLGVSSQRNRPSLSYRSTHRSTLSSQSSDLSWISAPKRQESLGSESEVGWTDTEATAVWGAAQPASGQSSCGQNLEDGMVKAPSSPQAKGQLPSLDLGMQDAP.

The Extracellular segment spans residues 1–71 (MDSPPGPTAP…VDVPDHAHYI (71 aa)). N30 is a glycosylation site (N-linked (GlcNAc...) asparagine). The helical transmembrane segment at 72 to 92 (LGTVILLVGLTGMLGNLTVIY) threads the bilayer. At 93 to 106 (TFCRSRSLRTPANM) the chain is on the cytoplasmic side. Residues 107–127 (LIINLAVSDFLMSFTQAPVFF) form a helical membrane-spanning segment. The Extracellular portion of the chain corresponds to 128 to 143 (ASSLYKKWLFGETGCE). C142 and C220 are oxidised to a cystine. The helical transmembrane segment at 144–164 (FYAFCGAVLGITSMITLTAIA) threads the bilayer. At 165-187 (LDRYLVITRPLATIGMGSKRRTA) the chain is on the cytoplasmic side. Residues 188 to 208 (LVLLGIWLYALAWSLPPFFGW) traverse the membrane as a helical segment. Residues 209–237 (SAYVPEGLLTSCSWDYVTFTPQVRAYTML) lie on the Extracellular side of the membrane. Residues 238–258 (LFCFVFFLPLLVIIFCYISIF) traverse the membrane as a helical segment. At 259–295 (RAIRETGRACEGWSESPQRRRQWHRLQSEWKMAKVAL) the chain is on the cytoplasmic side. Residues 296–316 (IVILLFVLSWAPYSTVALVAF) form a helical membrane-spanning segment. The Extracellular portion of the chain corresponds to 317–328 (AGYSHILTPYMS). Residues 329 to 349 (SVPAVIAKASAIHNPIVYAIT) form a helical membrane-spanning segment. K336 carries the post-translational modification N6-(retinylidene)lysine. At 350–469 (HPKYRAAIAQ…SLDLGMQDAP (120 aa)) the chain is on the cytoplasmic side. The tract at residues 409–469 (GSESEVGWTD…SLDLGMQDAP (61 aa)) is disordered.

Belongs to the G-protein coupled receptor 1 family. Opsin subfamily.

Its subcellular location is the cell membrane. It is found in the cell projection. The protein localises to the axon. It localises to the dendrite. The protein resides in the perikaryon. Photoreceptor that binds cis-retinaldehydes. Contributes to pupillar reflex, photoentrainment and other non-image forming responses to light. May be involved in the optokinetic visual tracking response. May be involved in the regulation of retinal hyaloid vessel growth and regression. The chain is Melanopsin (OPN4) from Phodopus sungorus (Striped hairy-footed hamster).